The following is a 500-amino-acid chain: L-arabinose isomerase (500 aa).

E306, E333, H350, and H450 together coordinate Mn(2+).

Belongs to the arabinose isomerase family. As to quaternary structure, homohexamer. Mn(2+) is required as a cofactor.

It catalyses the reaction beta-L-arabinopyranose = L-ribulose. It participates in carbohydrate degradation; L-arabinose degradation via L-ribulose; D-xylulose 5-phosphate from L-arabinose (bacterial route): step 1/3. Functionally, catalyzes the conversion of L-arabinose to L-ribulose. This Escherichia coli (strain 55989 / EAEC) protein is L-arabinose isomerase.